The sequence spans 338 residues: Probable protein S-acyltransferase 1 (338 aa).

The next 2 helical transmembrane spans lie at 32 to 52 and 68 to 88; these read DASS…AFSI and LTLI…FLTS. In terms of domain architecture, DHHC spans 142–192; the sequence is KFCDTCQLYRPPRAFHCSICNNCVQRFDHHCPWVGQCIALRNYPFFVCFLS. Cysteine 172 (S-palmitoyl cysteine intermediate) is an active-site residue. A run of 2 helical transmembrane segments spans residues 186-206 and 225-245; these read FFVC…VFSW and ILGV…GLTV. A disordered region spans residues 319–338; that stretch reads FGPKDTKMSSGKSDSEARER. The span at 320–338 shows a compositional bias: basic and acidic residues; sequence GPKDTKMSSGKSDSEARER.

It belongs to the DHHC palmitoyltransferase family.

It localises to the endosome membrane. The catalysed reaction is L-cysteinyl-[protein] + hexadecanoyl-CoA = S-hexadecanoyl-L-cysteinyl-[protein] + CoA. In terms of biological role, palmitoyl acyltransferase. This Arabidopsis thaliana (Mouse-ear cress) protein is Probable protein S-acyltransferase 1 (PAT01).